A 458-amino-acid chain; its full sequence is Argininosuccinate lyase (458 aa).

Belongs to the lyase 1 family. Argininosuccinate lyase subfamily.

It is found in the cytoplasm. The catalysed reaction is 2-(N(omega)-L-arginino)succinate = fumarate + L-arginine. The protein operates within amino-acid biosynthesis; L-arginine biosynthesis; L-arginine from L-ornithine and carbamoyl phosphate: step 3/3. This Geotalea daltonii (strain DSM 22248 / JCM 15807 / FRC-32) (Geobacter daltonii) protein is Argininosuccinate lyase.